The primary structure comprises 66 residues: Large ribosomal subunit protein uL29 (66 aa).

It belongs to the universal ribosomal protein uL29 family.

The polypeptide is Large ribosomal subunit protein uL29 (Helicobacter pylori (strain Shi470)).